The sequence spans 339 residues: 3-isopropylmalate dehydrogenase (339 aa).

Positions 88, 98, 122, and 212 each coordinate substrate. Mg(2+)-binding residues include D212, D236, and D240. 272–284 is an NAD(+) binding site; it reads GSAPDIAGQGIAD.

This sequence belongs to the isocitrate and isopropylmalate dehydrogenases family. LeuB type 2 subfamily. Homodimer. The cofactor is Mg(2+). Mn(2+) is required as a cofactor.

Its subcellular location is the cytoplasm. The enzyme catalyses (2R,3S)-3-isopropylmalate + NAD(+) = 4-methyl-2-oxopentanoate + CO2 + NADH. It functions in the pathway amino-acid biosynthesis; L-leucine biosynthesis; L-leucine from 3-methyl-2-oxobutanoate: step 3/4. In terms of biological role, catalyzes the oxidation of 3-carboxy-2-hydroxy-4-methylpentanoate (3-isopropylmalate) to 3-carboxy-4-methyl-2-oxopentanoate. The product decarboxylates to 4-methyl-2 oxopentanoate. The sequence is that of 3-isopropylmalate dehydrogenase from Corynebacterium urealyticum (strain ATCC 43042 / DSM 7109).